A 403-amino-acid polypeptide reads, in one-letter code: Imidazolonepropionase (403 aa).

Positions 68 and 70 each coordinate Fe(3+). The Zn(2+) site is built by His-68 and His-70. Arg-77, Tyr-140, and His-173 together coordinate 4-imidazolone-5-propanoate. Tyr-140 serves as a coordination point for N-formimidoyl-L-glutamate. His-238 provides a ligand contact to Fe(3+). Residue His-238 coordinates Zn(2+). Gln-241 serves as a coordination point for 4-imidazolone-5-propanoate. A Fe(3+)-binding site is contributed by Asp-313. Zn(2+) is bound at residue Asp-313. Asn-315 and Gly-317 together coordinate N-formimidoyl-L-glutamate. Residue Thr-318 participates in 4-imidazolone-5-propanoate binding.

This sequence belongs to the metallo-dependent hydrolases superfamily. HutI family. Zn(2+) serves as cofactor. Requires Fe(3+) as cofactor.

The protein localises to the cytoplasm. The enzyme catalyses 4-imidazolone-5-propanoate + H2O = N-formimidoyl-L-glutamate. It functions in the pathway amino-acid degradation; L-histidine degradation into L-glutamate; N-formimidoyl-L-glutamate from L-histidine: step 3/3. Catalyzes the hydrolytic cleavage of the carbon-nitrogen bond in imidazolone-5-propanoate to yield N-formimidoyl-L-glutamate. It is the third step in the universal histidine degradation pathway. The sequence is that of Imidazolonepropionase from Psychromonas ingrahamii (strain DSM 17664 / CCUG 51855 / 37).